Reading from the N-terminus, the 162-residue chain is Blue copper protein 1b (162 aa).

The signal sequence occupies residues 1-23; the sequence is MASSRVVLILSISMVLLSSVAIA. Residues 25–125 form the Phytocyanin domain; that stretch reads TDYIVGDDKG…QMKLVITVLA (101 aa). Residue His65 coordinates Cu cation. Asn71 carries N-linked (GlcNAc...) asparagine glycosylation. A disulfide bridge connects residues Cys78 and Cys112. Cu cation is bound by residues Cys106, His111, and Met117. Residues 142–162 traverse the membrane as a helical segment; it reads VVSSLFGVVMAIMVAIAVIFA.

It localises to the membrane. The polypeptide is Blue copper protein 1b (Medicago truncatula (Barrel medic)).